Reading from the N-terminus, the 373-residue chain is Phospho-N-acetylmuramoyl-pentapeptide-transferase (373 aa).

Helical transmembrane passes span 16 to 36 (WWTKGSTSASLLGIVIFAASF), 46 to 66 (LLSLPLMISTLISVLIASWGI), 93 to 113 (PTMGGLLVVPVGLIIGSFVSV), 120 to 140 (QLLALSWITLAYMLIGGFDDW), 157 to 177 (LLLQTAASLIFLAWAGWQHWI), 185 to 205 (LGISIQMGFMIWPLALFVFLA), 216 to 236 (LDGLASGCGALVFTGLAVQLM), 242 to 262 (GNPVLAGFCMAMAGAWLGFLM), 270 to 290 (VFMGDTGSLAMGAALSGVAIL), 298 to 318 (LVMGGVFLAESLSVIIQVWVF), and 350 to 369 (MVVRRFWLSTGGLVLLGLLL).

This sequence belongs to the glycosyltransferase 4 family. MraY subfamily. Mg(2+) serves as cofactor.

The protein localises to the cell inner membrane. It catalyses the reaction UDP-N-acetyl-alpha-D-muramoyl-L-alanyl-gamma-D-glutamyl-meso-2,6-diaminopimeloyl-D-alanyl-D-alanine + di-trans,octa-cis-undecaprenyl phosphate = di-trans,octa-cis-undecaprenyl diphospho-N-acetyl-alpha-D-muramoyl-L-alanyl-D-glutamyl-meso-2,6-diaminopimeloyl-D-alanyl-D-alanine + UMP. Its pathway is cell wall biogenesis; peptidoglycan biosynthesis. Catalyzes the initial step of the lipid cycle reactions in the biosynthesis of the cell wall peptidoglycan: transfers peptidoglycan precursor phospho-MurNAc-pentapeptide from UDP-MurNAc-pentapeptide onto the lipid carrier undecaprenyl phosphate, yielding undecaprenyl-pyrophosphoryl-MurNAc-pentapeptide, known as lipid I. The chain is Phospho-N-acetylmuramoyl-pentapeptide-transferase from Prochlorococcus marinus (strain MIT 9313).